Here is a 402-residue protein sequence, read N- to C-terminus: NADH-quinone oxidoreductase subunit D (402 aa).

This sequence belongs to the complex I 49 kDa subunit family. NDH-1 is composed of 14 different subunits. Subunits NuoB, C, D, E, F, and G constitute the peripheral sector of the complex.

It localises to the cell inner membrane. It carries out the reaction a quinone + NADH + 5 H(+)(in) = a quinol + NAD(+) + 4 H(+)(out). In terms of biological role, NDH-1 shuttles electrons from NADH, via FMN and iron-sulfur (Fe-S) centers, to quinones in the respiratory chain. The immediate electron acceptor for the enzyme in this species is believed to be ubiquinone. Couples the redox reaction to proton translocation (for every two electrons transferred, four hydrogen ions are translocated across the cytoplasmic membrane), and thus conserves the redox energy in a proton gradient. This chain is NADH-quinone oxidoreductase subunit D, found in Azorhizobium caulinodans (strain ATCC 43989 / DSM 5975 / JCM 20966 / LMG 6465 / NBRC 14845 / NCIMB 13405 / ORS 571).